The chain runs to 398 residues: MKFVDEAPISVEAGKGGNGALSFRKEKFVAKGGPDGGDGGDGGSVFLVADENLNTLIDYRFQPKYRAEDGEKGASKNCTGAKGDDLLLPVPVGTTVIDMDTEEVFGDLTEHGQRLKVAQGGFHGLGNTRFKSSTNRVPRKTTPGTEGEKRNLKLELKVLADVGMLGLPNAGKSSFIRAVSSAKPKVADYPFTTLVPNLGVVKVQQHRSFVIADIPGLIEGASEGAGLGVRFLKHLTRCRLLLHMVDMAPVDGSNPVDNVRVIANELQKFSPTLSNRDRWLLLNKIDLLPIDEVEARCAAVVKELEWTGPVFRVSALKHEGTAELSGKIMDHLEAIWEEERENPDARALELERQNQMAAEARERIEELREARRQARLAAGEDDDFNEDDYDVEVIYVNY.

One can recognise an Obg domain in the interval 1-159 (MKFVDEAPIS…RNLKLELKVL (159 aa)). A disordered region spans residues 128-148 (TRFKSSTNRVPRKTTPGTEGE). In terms of domain architecture, OBG-type G spans 160–333 (ADVGMLGLPN…LSGKIMDHLE (174 aa)). Residues 166-173 (GLPNAGKS), 191-195 (FTTLV), 213-216 (DIPG), 283-286 (NKID), and 314-316 (SAL) each bind GTP. Residues Ser-173 and Thr-193 each contribute to the Mg(2+) site.

The protein belongs to the TRAFAC class OBG-HflX-like GTPase superfamily. OBG GTPase family. In terms of assembly, monomer. The cofactor is Mg(2+).

It is found in the cytoplasm. Its function is as follows. An essential GTPase which binds GTP, GDP and possibly (p)ppGpp with moderate affinity, with high nucleotide exchange rates and a fairly low GTP hydrolysis rate. Plays a role in control of the cell cycle, stress response, ribosome biogenesis and in those bacteria that undergo differentiation, in morphogenesis control. This is GTPase Obg from Cellvibrio japonicus (strain Ueda107) (Pseudomonas fluorescens subsp. cellulosa).